We begin with the raw amino-acid sequence, 803 residues long: Phenylalanine--tRNA ligase beta subunit (803 aa).

In terms of domain architecture, tRNA-binding spans 40 to 153 (ASLDRRIVVG…SSWEIGKPFA (114 aa)). In terms of domain architecture, B5 spans 400–476 (ADLQLLALRP…RLYGYNAIES (77 aa)). Aspartate 454, aspartate 460, glutamate 463, and glutamate 464 together coordinate Mg(2+). The FDX-ACB domain maps to 709–801 (SRFPVVERDI…AESKLGAVIR (93 aa)).

This sequence belongs to the phenylalanyl-tRNA synthetase beta subunit family. Type 1 subfamily. In terms of assembly, tetramer of two alpha and two beta subunits. Mg(2+) serves as cofactor.

The protein resides in the cytoplasm. It carries out the reaction tRNA(Phe) + L-phenylalanine + ATP = L-phenylalanyl-tRNA(Phe) + AMP + diphosphate + H(+). The chain is Phenylalanine--tRNA ligase beta subunit from Chlorobium chlorochromatii (strain CaD3).